The primary structure comprises 21 residues: Natriuretic peptide TsNP (21 aa).

A disulfide bridge links Cys5 with Cys21.

As to expression, expressed by the venom gland.

Its subcellular location is the secreted. Scorpion venom natriuretic peptide that increases the perfusion pressure, glomerular filtration rate and urinary flow in the isolated perfused rat kidney assay. Induces a decrease of the percentages of renal transport for sodium, potassium and chloride and an increase of the urinary cGMP concentration. Also down-regulates the mRNA expression of natriuretic peptide receptor 1 (NPR1) in the kidneys whereas it up-regulates those of NPR2, NPR3 and guanylyl cyclase C (GUCY2C) mRNAs. May exhibit hypotensive and vasodepressor activities. In Tityus serrulatus (Brazilian scorpion), this protein is Natriuretic peptide TsNP.